A 139-amino-acid polypeptide reads, in one-letter code: MRFILLIALVFAVLDGINCQIAGGLSDVNASEYTGAAWNSVPEINSKNNGQNYMVPIKVVKAQVQVVAGTNTVLEVLVGESTCPRQGSVQASQVTAANCPLKSGGKRELYKVSIWEKPWENFKQTKAEKIRGVKPDEKI.

The N-terminal stretch at 1 to 19 (MRFILLIALVFAVLDGINC) is a signal peptide. Asn29 is a glycosylation site (N-linked (GlcNAc...) asparagine). The Secondary area of contact signature appears at 65–69 (QVVAG). Cysteines 83 and 99 form a disulfide.

The protein belongs to the cystatin family.

Functionally, cysteine protease inhibitor which inhibits members of the peptidase C1 family. Does not inhibit asparaginyl endopeptidase. May play a protective role against exogenous cysteine proteases derived from soil bacteria or fungi, or rotting fruits and vegetation. This Caenorhabditis elegans protein is Cystatin cpi-1.